The primary structure comprises 172 residues: T-cell receptor gamma chain C region C7.5 (172 aa).

The segment at 1 to 140 is c region; sequence DKKLDADISP…QFTITSAYYT (140 aa). Residues 141–160 traverse the membrane as a helical segment; the sequence is YLLLLLKSVIYLAIISFSLL. Residues 161–172 are Cytoplasmic-facing; it reads RRTSVCCNEKKS.

Its subcellular location is the membrane. The sequence is that of T-cell receptor gamma chain C region C7.5 from Mus musculus (Mouse).